Consider the following 1230-residue polypeptide: SAM and SH3 domain-containing protein 1 (1230 aa).

Low complexity predominate over residues 1–10 (MEEDAGAASP). The segment at 1-30 (MEEDAGAASPAPEPEPEVDPARELEPEAGV) is disordered. A phosphoserine mark is found at Ser83 and Ser241. 2 disordered regions span residues 211–249 (RQSS…EDSV) and 275–337 (KKPS…LDTW). Over residues 275–297 (KKPSAEGGEEHVFENSPVQDERS) the composition is skewed to basic and acidic residues. Positions 324-336 (SLTPSPSSSSLDT) are enriched in low complexity. Residue Ser400 is modified to Phosphoserine. Disordered stretches follow at residues 439-566 (PRIS…YDTD), 610-633 (EEKP…SVED), and 705-792 (VDNQ…KSCD). The segment covering 461 to 470 (KYSSPVSEQD) has biased composition (polar residues). Residues 485–494 (PDSEHVDKPK) show a composition bias toward basic and acidic residues. Residues 498-516 (GGSVESLRSSLSGQSSMSG) show a composition bias toward low complexity. Over residues 517-529 (QTVSTTDSSTSNR) the composition is skewed to polar residues. The SH3 domain maps to 547 to 608 (PFCGRARVHT…KFIYVDVLNE (62 aa)). Residues 615–624 (RPTRRRKKGR) show a composition bias toward basic residues. The SAM 1 domain occupies 626–690 (SQPKSVEDLL…LTAVELLQEY (65 aa)). The span at 737–758 (VLSTKSSTESNLKSFTRSQPGN) shows a compositional bias: polar residues. Positions 768 to 779 (GEVRKQGEEGRL) are enriched in basic and acidic residues. Phosphoserine occurs at positions 813 and 831. 2 disordered regions span residues 818 to 875 (EGPE…LPRG) and 915 to 1045 (PPQC…PWLA). Residues 844 to 852 (NVPTEMPET) form a required for interaction with TRAF6 region. Polar residues predominate over residues 852–868 (TCSQNVPEVPQKTSACT). Over residues 940-956 (GLRKGHDHHPLGTKEGV) the composition is skewed to basic and acidic residues. Positions 962–972 (APETRTQSRHP) are enriched in polar residues. Residues 1008 to 1019 (SPASPVSPSDCP) show a composition bias toward low complexity. In terms of domain architecture, SAM 2 spans 1160-1224 (GCVASMSDWL…ITAARLFKLP (65 aa)).

As to quaternary structure, interacts with GNAS. Interacts with IQGAP1. Interacts with TRAF6 (via C-terminus); the interaction is LPS-dependent. Interacts with MAP3K7, CHUK and IKBKB. In terms of tissue distribution, expressed in the microvascular endothelium of various organs, as well as in parenchymal cells. Expressed in the endothelium but not lymphoid cells of spleen and thymus.

Its subcellular location is the cytoplasm. In terms of biological role, is a positive regulator of NF-kappa-B signaling downstream of TLR4 activation. It acts as a scaffold molecule to assemble a molecular complex that includes TRAF6, MAP3K7, CHUK and IKBKB, thereby facilitating NF-kappa-B signaling activation. Regulates TRAF6 and MAP3K7 ubiquitination. Involved in the regulation of cell mobility. Regulates lipolysaccharide (LPS)-induced endothelial cell migration. Is involved in the regulation of skin pigmentation through the control of melanocyte migration in the epidermis. The polypeptide is SAM and SH3 domain-containing protein 1 (Sash1) (Mus musculus (Mouse)).